We begin with the raw amino-acid sequence, 174 residues long: Mytilin-3 (174 aa).

The signal sequence occupies residues 1–16 (MLKGIILIVTIQLVNA).

Component of the organic matrix of calcified shell layers like nacre and prisms.

It is found in the secreted. This is Mytilin-3 from Mytilus californianus (California mussel).